A 352-amino-acid polypeptide reads, in one-letter code: Gap junction alpha-4 protein (352 aa).

The Cytoplasmic segment spans residues 2–23 (GDWEFLEKLLDQVQEHSTSIGK). A helical transmembrane segment spans residues 24-46 (IWLMVLFIFRILILGLAGESVWG). Residues 47–76 (DEQSDFTCNTEQPGCTNVCYDKAFPISHVR) are Extracellular-facing. A helical transmembrane segment spans residues 77-99 (YWVLQFLFVSTPTLFYLGHVIYL). Over 100–153 (SRKEEKLKQKESELRALDDKEQVEQAIAIIEKKKLKLYIQEDGTVKIKGALMYT) the chain is Cytoplasmic. A helical membrane pass occupies residues 154–176 (YLTSVIFKSIFEAGFLLGQWYLY). The Extracellular portion of the chain corresponds to 177–208 (GFVMTPIYVCERVPCPHKVDCFVSRPMEKTIF). Residues 209 to 231 (IIFMLVVSLISLFLNVLELIHLI) traverse the membrane as a helical segment. At 232–352 (CKSMIHALKK…SSSASKKQYV (121 aa)) the chain is on the cytoplasmic side. Residues 332–352 (HSTVEKASTRASSSASKKQYV) form a disordered region. A compositionally biased stretch (low complexity) spans 340-352 (TRASSSASKKQYV).

This sequence belongs to the connexin family. Alpha-type (group II) subfamily. As to quaternary structure, a connexon is composed of a hexamer of connexins. As to expression, expressed in ovarian somatic cells, heart, leg muscle, liver and eye but not in brain.

It is found in the cell membrane. Its subcellular location is the cell junction. It localises to the gap junction. Functionally, one gap junction consists of a cluster of closely packed pairs of transmembrane channels, the connexons, through which materials of low MW diffuse from one cell to a neighboring cell. This Xenopus laevis (African clawed frog) protein is Gap junction alpha-4 protein (gja4).